The chain runs to 384 residues: Cytochrome b (384 aa).

4 helical membrane-spanning segments follow: residues Y33–M53, W77–I98, W113–L133, and F178–L198. H83 and H97 together coordinate heme b. Heme b is bound by residues H182 and H196. Residue H201 coordinates a ubiquinone. Helical transmembrane passes span Y226–T246, L288–H308, L320–G340, and F347–P367.

It belongs to the cytochrome b family. As to quaternary structure, the cytochrome bc1 complex contains 3 respiratory subunits (MT-CYB, CYC1 and UQCRFS1), 2 core proteins (UQCRC1 and UQCRC2) and probably 6 low-molecular weight proteins. Heme b serves as cofactor.

The protein resides in the mitochondrion inner membrane. In terms of biological role, component of the ubiquinol-cytochrome c reductase complex (complex III or cytochrome b-c1 complex) that is part of the mitochondrial respiratory chain. The b-c1 complex mediates electron transfer from ubiquinol to cytochrome c. Contributes to the generation of a proton gradient across the mitochondrial membrane that is then used for ATP synthesis. In Anoplogaster cornuta (Common fangtooth), this protein is Cytochrome b (mt-cyb).